The sequence spans 391 residues: Small ribosomal subunit protein bS1 (391 aa).

4 consecutive S1 motif domains span residues 16-90 (GDKV…LSRR), 108-173 (NEII…LSRK), 194-262 (GDVI…LSIK), and 279-348 (NDDI…LSIK). Residues 356-381 (VVESDPSTTKAYLESEEEDNPTIGDM) are disordered.

Belongs to the bacterial ribosomal protein bS1 family.

Functionally, binds mRNA; thus facilitating recognition of the initiation point. It is needed to translate mRNA with a short Shine-Dalgarno (SD) purine-rich sequence. The chain is Small ribosomal subunit protein bS1 (rpsA) from Staphylococcus aureus (strain MRSA252).